We begin with the raw amino-acid sequence, 39 residues long: Photosystem II reaction center protein L (39 aa).

Residues 18–38 traverse the membrane as a helical segment; that stretch reads SLYLGLLLVFVTGVLFSSYFF.

Belongs to the PsbL family. As to quaternary structure, PSII is composed of 1 copy each of membrane proteins PsbA, PsbB, PsbC, PsbD, PsbE, PsbF, PsbH, PsbI, PsbJ, PsbK, PsbL, PsbM, PsbT, PsbX, PsbY, PsbZ, Psb30/Ycf12, peripheral proteins PsbO, CyanoQ (PsbQ), PsbU, PsbV and a large number of cofactors. It forms dimeric complexes.

The protein resides in the cellular thylakoid membrane. Its function is as follows. One of the components of the core complex of photosystem II (PSII). PSII is a light-driven water:plastoquinone oxidoreductase that uses light energy to abstract electrons from H(2)O, generating O(2) and a proton gradient subsequently used for ATP formation. It consists of a core antenna complex that captures photons, and an electron transfer chain that converts photonic excitation into a charge separation. This subunit is found at the monomer-monomer interface and is required for correct PSII assembly and/or dimerization. The polypeptide is Photosystem II reaction center protein L (Synechococcus sp. (strain RCC307)).